The primary structure comprises 389 residues: D-alanyl-D-alanine carboxypeptidase DacF (389 aa).

A signal peptide spans 1–23 (MKRLLSTLLIGIMLLTFAPSAFA). Ser-64 acts as the Acyl-ester intermediate in catalysis. Lys-67 (proton acceptor) is an active-site residue. The active site involves Ser-124. Lys-230 contributes to the substrate binding site.

The protein belongs to the peptidase S11 family.

It localises to the secreted. The enzyme catalyses Preferential cleavage: (Ac)2-L-Lys-D-Ala-|-D-Ala. Also transpeptidation of peptidyl-alanyl moieties that are N-acyl substituents of D-alanine.. Its pathway is cell wall biogenesis; peptidoglycan biosynthesis. Removes C-terminal D-alanyl residues from sugar-peptide cell wall precursors. This is D-alanyl-D-alanine carboxypeptidase DacF (dacF) from Bacillus subtilis (strain 168).